Consider the following 484-residue polypeptide: MAKAPTTKNVGRISQVIGAVVDVSFDGSLPAILNALETTNNGNRLVLEVAQHLGEGTVRTIAMDATDGLTRGQEVTDTGSQIRVPVGPQTLGRILNVIGEPIDERGPVNATQTSPIHAEAPLFVDQSTDASILVTGIKVIDLLAPYAKGGKIGLFGGAGVGKTVLIQELINNIAKGHGGTSVFAGVGERTREGNDLYHEFLDAGVIAKDADGNPTPEGSKVALVFGQMNEPPGARARVALSGLTIAEYFRDVEGQDVLFFVDNIFRFTQAGSEVSALLGRIPSAVGYQPTLSTDMGALQERITSTNKGSITSVQAIYVPADDLTDPAPATSFAHLDATTNLNRAISELGIYPAVDPLDSTSRMLEPRIVGQEHYETARAVQETLQKYKSLQDIIAILGMDELSEEDKLTVQRARKIQRFLSQPFHVAEVFTGIAGKFVAIEDTVKSFKAVVEGEYDHLPEAAFYMVGGIDEVVEKAKKLAAEAA.

Gly156–Thr163 serves as a coordination point for ATP.

This sequence belongs to the ATPase alpha/beta chains family. As to quaternary structure, F-type ATPases have 2 components, CF(1) - the catalytic core - and CF(0) - the membrane proton channel. CF(1) has five subunits: alpha(3), beta(3), gamma(1), delta(1), epsilon(1). CF(0) has three main subunits: a(1), b(2) and c(9-12). The alpha and beta chains form an alternating ring which encloses part of the gamma chain. CF(1) is attached to CF(0) by a central stalk formed by the gamma and epsilon chains, while a peripheral stalk is formed by the delta and b chains.

The protein resides in the cell inner membrane. The catalysed reaction is ATP + H2O + 4 H(+)(in) = ADP + phosphate + 5 H(+)(out). Produces ATP from ADP in the presence of a proton gradient across the membrane. The catalytic sites are hosted primarily by the beta subunits. This chain is ATP synthase subunit beta, found in Rhizorhabdus wittichii (strain DSM 6014 / CCUG 31198 / JCM 15750 / NBRC 105917 / EY 4224 / RW1) (Sphingomonas wittichii).